A 295-amino-acid polypeptide reads, in one-letter code: MGKRDIALRIKSVKEVRKITRAMYLISASKFQKAKGMLDRVRPYYYRVQTVMKDILLHTGEVTSRYLEKKDVPEKQDKRKVFLIVTGDKGLCGAYNHNVIKASIELIKNEKANLKVVGEVGRRYFIKKGYDVDRDFLYTAQNPTVDLAAEIAEILLKEYNNGDADEIWAVYTEMKGLSQKVRTLRLLPLDVENFMSIAAEEEEAVEEHVVIDSDMIYEPSPSEVFDAIVPEYLKGLIYSILVQAFASEHFSRMVAMDGATSNADEMIEKLTLLYNKLRQASITQEIIEIITGASV.

It belongs to the ATPase gamma chain family. In terms of assembly, F-type ATPases have 2 components, CF(1) - the catalytic core - and CF(0) - the membrane proton channel. CF(1) has five subunits: alpha(3), beta(3), gamma(1), delta(1), epsilon(1). CF(0) has three main subunits: a, b and c.

It is found in the cell membrane. Functionally, produces ATP from ADP in the presence of a proton gradient across the membrane. The gamma chain is believed to be important in regulating ATPase activity and the flow of protons through the CF(0) complex. This Caldanaerobacter subterraneus subsp. tengcongensis (strain DSM 15242 / JCM 11007 / NBRC 100824 / MB4) (Thermoanaerobacter tengcongensis) protein is ATP synthase gamma chain.